Consider the following 67-residue polypeptide: Large ribosomal subunit protein bL31 (67 aa).

Zn(2+) is bound by residues cysteine 16, cysteine 18, cysteine 36, and cysteine 39.

The protein belongs to the bacterial ribosomal protein bL31 family. Type A subfamily. As to quaternary structure, part of the 50S ribosomal subunit. It depends on Zn(2+) as a cofactor.

In terms of biological role, binds the 23S rRNA. The chain is Large ribosomal subunit protein bL31 from Syntrophomonas wolfei subsp. wolfei (strain DSM 2245B / Goettingen).